We begin with the raw amino-acid sequence, 245 residues long: Nucleoprotein (245 aa).

The RNA site is built by Y30, K67, R106, R186, and S196.

It belongs to the phlebovirus nucleocapsid protein family. Homodimer. Homohexamer; ring-shaped, necessary to form the nucleocapsid. Homopentamers; opened pentamers in solution. Binds to viral genomic RNA. Interacts with glycoprotein Gn; this interaction allows packaging of nucleocapsids into virions.

Its subcellular location is the virion. It localises to the host cytoplasm. The protein localises to the host nucleus. It is found in the host endoplasmic reticulum-Golgi intermediate compartment. The protein resides in the host Golgi apparatus. Encapsidates the genomic RNA, protecting it from nucleases. Displays high affinity for single-stranded nucleic acid. The encapsidated genomic RNA is termed the nucleocapsid (NC) or ribonucleoprotein. The ribonucleoprotein has a non-helical structure. Serves as template for viral transcription and replication. After replication, the nucleocapsid is recruited to the host Golgi apparatus by glycoprotein Gn for packaging into virus particles. This Dabie bandavirus (Severe fever with thrombocytopenia virus) protein is Nucleoprotein (NP).